The primary structure comprises 163 residues: Phosphopantetheine adenylyltransferase (163 aa).

Residue Ser9 coordinates substrate. ATP-binding positions include 9–10 (SF) and His17. Positions 41, 75, and 89 each coordinate substrate. ATP is bound by residues 90–92 (GIR), Glu100, and 125–131 (HLYVRSD).

It belongs to the bacterial CoaD family. Homohexamer. It depends on Mg(2+) as a cofactor.

Its subcellular location is the cytoplasm. The catalysed reaction is (R)-4'-phosphopantetheine + ATP + H(+) = 3'-dephospho-CoA + diphosphate. It participates in cofactor biosynthesis; coenzyme A biosynthesis; CoA from (R)-pantothenate: step 4/5. Its function is as follows. Reversibly transfers an adenylyl group from ATP to 4'-phosphopantetheine, yielding dephospho-CoA (dPCoA) and pyrophosphate. The sequence is that of Phosphopantetheine adenylyltransferase from Borreliella burgdorferi (strain ZS7) (Borrelia burgdorferi).